The following is a 440-amino-acid chain: Syntrophin-1 (440 aa).

PH domains are found at residues 2 to 208 (AAVR…ACTT) and 227 to 340 (QVRH…IGGY). One can recognise a PDZ domain in the interval 45-128 (TVRVVKYDGN…VVDLQVQYRR (84 aa)). The 57-residue stretch at 384–440 (SFETIRATGDDGGRFLWVDFGPPHGEQELDLLNSAKPVVFILHSFLATKVYRLGLYA) folds into the SU domain.

This sequence belongs to the syntrophin family. In terms of assembly, component of the dystrophin glycoprotein complex (DGC). Interacts with dyb-1, dys-1 and snf-6 to form the DGC. In terms of tissue distribution, expressed in neurons and muscles; particularly strong expression in the body wall, head and vulval muscles, and in ventral nerve cord (at protein level).

It localises to the membrane. The protein resides in the cytoplasm. The protein localises to the cytoskeleton. Adapter protein that binds to and probably organizes the subcellular localization of a variety of membrane proteins. May link various receptors to the actin cytoskeleton and the dystrophin glycoprotein complex (DGC). May also act by slowing calcium channel activity via a direct or indirect mechanism potentially involving other second messengers. Plays an early role in the formation of the neuromuscular junction and is necessary for muscle maintenance. This is Syntrophin-1 from Caenorhabditis elegans.